A 239-amino-acid polypeptide reads, in one-letter code: Purine nucleoside phosphorylase DeoD-type (239 aa).

Residue histidine 5 participates in a purine D-ribonucleoside binding. Phosphate is bound by residues glycine 21, arginine 25, arginine 44, and 88 to 91; that span reads RIGS. Residues 180–182 and 204–205 each bind a purine D-ribonucleoside; these read EME and TD. Aspartate 205 acts as the Proton donor in catalysis.

The protein belongs to the PNP/UDP phosphorylase family. Homohexamer; trimer of homodimers.

It catalyses the reaction a purine D-ribonucleoside + phosphate = a purine nucleobase + alpha-D-ribose 1-phosphate. The enzyme catalyses a purine 2'-deoxy-D-ribonucleoside + phosphate = a purine nucleobase + 2-deoxy-alpha-D-ribose 1-phosphate. In terms of biological role, catalyzes the reversible phosphorolytic breakdown of the N-glycosidic bond in the beta-(deoxy)ribonucleoside molecules, with the formation of the corresponding free purine bases and pentose-1-phosphate. This is Purine nucleoside phosphorylase DeoD-type from Aliivibrio fischeri (strain ATCC 700601 / ES114) (Vibrio fischeri).